Here is a 121-residue protein sequence, read N- to C-terminus: Protein yippee-like 5 (121 aa).

The region spanning 13–110 (RLFSCANCDA…LERALVRESE (98 aa)) is the Yippee domain. Zn(2+) contacts are provided by C17, C20, C73, and C76. S118 is subject to Phosphoserine.

The protein belongs to the yippee family. In terms of assembly, identified in the CTLH complex that contains GID4, RANBP9 and/or RANBP10, MKLN1, MAEA, RMND5A (or alternatively its paralog RMND5B), GID8, ARMC8, WDR26 and YPEL5. Within this complex, MAEA, RMND5A (or alternatively its paralog RMND5B), GID8, WDR26, and RANBP9 and/or RANBP10 form the catalytic core, while GID4, MKLN1, ARMC8 and YPEL5 have ancillary roles. Interacts with RANBP9 and RANBP10.

It is found in the nucleus. It localises to the cytoplasm. The protein resides in the cytoskeleton. The protein localises to the microtubule organizing center. Its subcellular location is the centrosome. It is found in the spindle pole. It localises to the midbody. Functionally, component of the CTLH E3 ubiquitin-protein ligase complex that selectively accepts ubiquitin from UBE2H and mediates ubiquitination and subsequent proteasomal degradation of the transcription factor HBP1. Required for normal cell proliferation. This is Protein yippee-like 5 (YPEL5) from Macaca fascicularis (Crab-eating macaque).